Reading from the N-terminus, the 81-residue chain is Cytochrome b559 subunit alpha (81 aa).

Residues 21–35 (VIHSITIPMLFIAGW) form a helical membrane-spanning segment. Position 23 (His-23) interacts with heme.

The protein belongs to the PsbE/PsbF family. As to quaternary structure, heterodimer of an alpha subunit and a beta subunit. PSII is composed of 1 copy each of membrane proteins PsbA, PsbB, PsbC, PsbD, PsbE, PsbF, PsbH, PsbI, PsbJ, PsbK, PsbL, PsbM, PsbT, PsbX, PsbY, PsbZ, Psb30/Ycf12, peripheral proteins PsbO, CyanoQ (PsbQ), PsbU, PsbV and a large number of cofactors. It forms dimeric complexes. Heme b is required as a cofactor.

The protein localises to the cellular thylakoid membrane. Its function is as follows. This b-type cytochrome is tightly associated with the reaction center of photosystem II (PSII). PSII is a light-driven water:plastoquinone oxidoreductase that uses light energy to abstract electrons from H(2)O, generating O(2) and a proton gradient subsequently used for ATP formation. It consists of a core antenna complex that captures photons, and an electron transfer chain that converts photonic excitation into a charge separation. This chain is Cytochrome b559 subunit alpha, found in Rippkaea orientalis (strain PCC 8801 / RF-1) (Cyanothece sp. (strain PCC 8801)).